Reading from the N-terminus, the 360-residue chain is Isopentenyl-diphosphate delta-isomerase (360 aa).

Residue 6–7 participates in substrate binding; that stretch reads RK. Residues T62, 63–65, S93, and N122 contribute to the FMN site; that span reads GMT. 93 to 95 serves as a coordination point for substrate; that stretch reads SQR. Residue Q157 participates in substrate binding. Residue E158 coordinates Mg(2+). Residues K189, S214, T219, 272 to 274, and 293 to 294 contribute to the FMN site; these read GIR and AL.

It belongs to the IPP isomerase type 2 family. Homooctamer. Dimer of tetramers. The cofactor is FMN. NADPH serves as cofactor. Requires Mg(2+) as cofactor.

The protein resides in the cytoplasm. It catalyses the reaction isopentenyl diphosphate = dimethylallyl diphosphate. Involved in the biosynthesis of isoprenoids. Catalyzes the 1,3-allylic rearrangement of the homoallylic substrate isopentenyl (IPP) to its allylic isomer, dimethylallyl diphosphate (DMAPP). The sequence is that of Isopentenyl-diphosphate delta-isomerase from Ignicoccus hospitalis (strain KIN4/I / DSM 18386 / JCM 14125).